An 830-amino-acid polypeptide reads, in one-letter code: Formin-like protein 14 (830 aa).

The first 34 residues, 1–34 (MAMAMAMPSSSPPLFFSLLNLMLLLLLLAPYCSA), serve as a signal peptide directing secretion. The span at 40–59 (NNTHHRSSSPTQTTLQQLHS) shows a compositional bias: polar residues. Residues 40–195 (NNTHHRSSSP…NISTLVHPTQ (156 aa)) are disordered. Pro residues-rich tracts occupy residues 61–86 (DSPP…PAPR) and 95–135 (PPPP…PTPK). Residues 149-160 (YPFTNYPFFPNF) are compositionally biased toward low complexity. Residues 203 to 223 (VLQALLLSFLSLCLLLLSALL) traverse the membrane as a helical segment. The interval 235–446 (HHSHSHPNAR…LHSDKLKPGS (212 aa)) is disordered. Positions 314–323 (RPLPPLPRVG) are enriched in pro residues. A compositionally biased stretch (low complexity) spans 324-369 (PPSGEFASRSSASDPSTAPPAAAEASSSSLSPSSPSASSPTLGSSP). An FH2 domain is found at 390 to 823 (PKRRPQPPEP…MMGRDWNMAA (434 aa)). The span at 424–446 (HSPSEKSMRKSRPLHSDKLKPGS) shows a compositional bias: basic and acidic residues.

This sequence belongs to the formin-like family. Class-I subfamily.

It localises to the membrane. The sequence is that of Formin-like protein 14 (FH14) from Oryza sativa subsp. japonica (Rice).